The primary structure comprises 156 residues: SsrA-binding protein (156 aa).

It belongs to the SmpB family.

The protein localises to the cytoplasm. Functionally, required for rescue of stalled ribosomes mediated by trans-translation. Binds to transfer-messenger RNA (tmRNA), required for stable association of tmRNA with ribosomes. tmRNA and SmpB together mimic tRNA shape, replacing the anticodon stem-loop with SmpB. tmRNA is encoded by the ssrA gene; the 2 termini fold to resemble tRNA(Ala) and it encodes a 'tag peptide', a short internal open reading frame. During trans-translation Ala-aminoacylated tmRNA acts like a tRNA, entering the A-site of stalled ribosomes, displacing the stalled mRNA. The ribosome then switches to translate the ORF on the tmRNA; the nascent peptide is terminated with the 'tag peptide' encoded by the tmRNA and targeted for degradation. The ribosome is freed to recommence translation, which seems to be the essential function of trans-translation. This Staphylococcus carnosus (strain TM300) protein is SsrA-binding protein.